Consider the following 24-residue polypeptide: Hemocyanin subunit 4e (24 aa).

It belongs to the tyrosinase family. Hemocyanin subfamily. Hemolymph.

Its subcellular location is the secreted. It localises to the extracellular space. Hemocyanins are copper-containing oxygen carriers occurring freely dissolved in the hemolymph of many mollusks and arthropods. This Maja squinado (Mediterranean spider crab) protein is Hemocyanin subunit 4e.